We begin with the raw amino-acid sequence, 101 residues long: MAKKSSIEKNNRRKKMAKNAAPKRERLKAIIADRSKPMEERFAATLKLAEMPRNSSITRVRNRCELTGRARAVYRKNKLSRIAIRDLGSRGLVPGLVKSSW.

Basic and acidic residues predominate over residues 1 to 10 (MAKKSSIEKN). The tract at residues 1–25 (MAKKSSIEKNNRRKKMAKNAAPKRE) is disordered.

The protein belongs to the universal ribosomal protein uS14 family. Part of the 30S ribosomal subunit. Contacts proteins S3 and S10.

In terms of biological role, binds 16S rRNA, required for the assembly of 30S particles and may also be responsible for determining the conformation of the 16S rRNA at the A site. The polypeptide is Small ribosomal subunit protein uS14 (Rhodopseudomonas palustris (strain BisA53)).